The sequence spans 113 residues: Large ribosomal subunit protein uL22 (113 aa).

The protein belongs to the universal ribosomal protein uL22 family. Part of the 50S ribosomal subunit.

In terms of biological role, this protein binds specifically to 23S rRNA; its binding is stimulated by other ribosomal proteins, e.g. L4, L17, and L20. It is important during the early stages of 50S assembly. It makes multiple contacts with different domains of the 23S rRNA in the assembled 50S subunit and ribosome. Functionally, the globular domain of the protein is located near the polypeptide exit tunnel on the outside of the subunit, while an extended beta-hairpin is found that lines the wall of the exit tunnel in the center of the 70S ribosome. This is Large ribosomal subunit protein uL22 from Herpetosiphon aurantiacus (strain ATCC 23779 / DSM 785 / 114-95).